The sequence spans 376 residues: N-acetyldiaminopimelate deacetylase (376 aa).

Asp-70 is an active-site residue. Residue Glu-129 is the Proton acceptor of the active site.

This sequence belongs to the peptidase M20A family. N-acetyldiaminopimelate deacetylase subfamily.

The enzyme catalyses N-acetyl-(2S,6S)-2,6-diaminopimelate + H2O = (2S,6S)-2,6-diaminopimelate + acetate. It participates in amino-acid biosynthesis; L-lysine biosynthesis via DAP pathway; LL-2,6-diaminopimelate from (S)-tetrahydrodipicolinate (acetylase route): step 3/3. Catalyzes the conversion of N-acetyl-diaminopimelate to diaminopimelate and acetate. This Bacillus pumilus (strain SAFR-032) protein is N-acetyldiaminopimelate deacetylase.